Reading from the N-terminus, the 227-residue chain is Ribosomal RNA small subunit methyltransferase G (227 aa).

Residues Gly74, Leu79, 124–125 (AE), and Arg142 each bind S-adenosyl-L-methionine.

Belongs to the methyltransferase superfamily. RNA methyltransferase RsmG family.

Its subcellular location is the cytoplasm. In terms of biological role, specifically methylates the N7 position of guanine in position 518 of 16S rRNA. The protein is Ribosomal RNA small subunit methyltransferase G of Mycolicibacterium vanbaalenii (strain DSM 7251 / JCM 13017 / BCRC 16820 / KCTC 9966 / NRRL B-24157 / PYR-1) (Mycobacterium vanbaalenii).